The primary structure comprises 237 residues: Indole-3-glycerol phosphate synthase (237 aa).

The protein belongs to the TrpC family.

The catalysed reaction is 1-(2-carboxyphenylamino)-1-deoxy-D-ribulose 5-phosphate + H(+) = (1S,2R)-1-C-(indol-3-yl)glycerol 3-phosphate + CO2 + H2O. It functions in the pathway amino-acid biosynthesis; L-tryptophan biosynthesis; L-tryptophan from chorismate: step 4/5. The polypeptide is Indole-3-glycerol phosphate synthase (Thermoplasma volcanium (strain ATCC 51530 / DSM 4299 / JCM 9571 / NBRC 15438 / GSS1)).